Here is a 493-residue protein sequence, read N- to C-terminus: Protein nucleotidyltransferase YdiU (493 aa).

The ATP site is built by Gly94, Gly96, Arg97, Lys117, Asp129, Gly130, Arg180, and Arg187. Asp256 serves as the catalytic Proton acceptor. Residues Asn257 and Asp266 each contribute to the Mg(2+) site. Asp266 serves as a coordination point for ATP.

Belongs to the SELO family. Mg(2+) serves as cofactor. The cofactor is Mn(2+).

It carries out the reaction L-seryl-[protein] + ATP = 3-O-(5'-adenylyl)-L-seryl-[protein] + diphosphate. The catalysed reaction is L-threonyl-[protein] + ATP = 3-O-(5'-adenylyl)-L-threonyl-[protein] + diphosphate. It catalyses the reaction L-tyrosyl-[protein] + ATP = O-(5'-adenylyl)-L-tyrosyl-[protein] + diphosphate. The enzyme catalyses L-histidyl-[protein] + UTP = N(tele)-(5'-uridylyl)-L-histidyl-[protein] + diphosphate. It carries out the reaction L-seryl-[protein] + UTP = O-(5'-uridylyl)-L-seryl-[protein] + diphosphate. The catalysed reaction is L-tyrosyl-[protein] + UTP = O-(5'-uridylyl)-L-tyrosyl-[protein] + diphosphate. Functionally, nucleotidyltransferase involved in the post-translational modification of proteins. It can catalyze the addition of adenosine monophosphate (AMP) or uridine monophosphate (UMP) to a protein, resulting in modifications known as AMPylation and UMPylation. The protein is Protein nucleotidyltransferase YdiU of Hahella chejuensis (strain KCTC 2396).